We begin with the raw amino-acid sequence, 148 residues long: Hemoglobin subunit alpha (148 aa).

An N-acetylserine modification is found at S1. One can recognise a Globin domain in the interval 8-148 (DYSAADRAEL…VCHELSSRYR (141 aa)). H66 is a binding site for O2. Residue H95 participates in heme b binding.

This sequence belongs to the globin family. In terms of assembly, heterotetramer of two alpha chains and two beta chains. In terms of tissue distribution, red blood cells.

Its function is as follows. Involved in oxygen transport from the lung to the various peripheral tissues. The chain is Hemoglobin subunit alpha (HBA) from Heterodontus portusjacksoni (Port Jackson shark).